Consider the following 226-residue polypeptide: Putative ABC transporter ATP-binding protein BH02760 (226 aa).

The 219-residue stretch at 4–222 (IKFDKVTQVF…IPLVAIKEYI (219 aa)) folds into the ABC transporter domain. 35–42 (GANGSGKS) lines the ATP pocket.

It belongs to the ABC transporter superfamily.

The protein localises to the cell inner membrane. In terms of biological role, probably part of an ABC transporter complex. Responsible for energy coupling to the transport system. This chain is Putative ABC transporter ATP-binding protein BH02760, found in Bartonella henselae (strain ATCC 49882 / DSM 28221 / CCUG 30454 / Houston 1) (Rochalimaea henselae).